The following is a 177-amino-acid chain: Ribosome maturation factor RimM (177 aa).

The PRC barrel domain occupies 96–177; that stretch reads DNEFYWVDLI…KITVDWGLDY (82 aa).

Belongs to the RimM family. In terms of assembly, binds ribosomal protein uS19.

It is found in the cytoplasm. Functionally, an accessory protein needed during the final step in the assembly of 30S ribosomal subunit, possibly for assembly of the head region. Essential for efficient processing of 16S rRNA. May be needed both before and after RbfA during the maturation of 16S rRNA. It has affinity for free ribosomal 30S subunits but not for 70S ribosomes. The sequence is that of Ribosome maturation factor RimM from Herminiimonas arsenicoxydans.